The following is a 274-amino-acid chain: Shikimate dehydrogenase (NADP(+)) (274 aa).

Shikimate-binding positions include 14 to 16 (SKS) and Thr60. Lys64 serves as the catalytic Proton acceptor. Glu76 contacts NADP(+). Shikimate is bound by residues Asn85 and Asp101. Residues 126–130 (GAGGA), 150–155 (NRTARK), and Met214 each bind NADP(+). Residue Tyr216 coordinates shikimate. Gly238 is a binding site for NADP(+).

It belongs to the shikimate dehydrogenase family. As to quaternary structure, homodimer.

The enzyme catalyses shikimate + NADP(+) = 3-dehydroshikimate + NADPH + H(+). It participates in metabolic intermediate biosynthesis; chorismate biosynthesis; chorismate from D-erythrose 4-phosphate and phosphoenolpyruvate: step 4/7. Functionally, involved in the biosynthesis of the chorismate, which leads to the biosynthesis of aromatic amino acids. Catalyzes the reversible NADPH linked reduction of 3-dehydroshikimate (DHSA) to yield shikimate (SA). In Pseudomonas aeruginosa (strain ATCC 15692 / DSM 22644 / CIP 104116 / JCM 14847 / LMG 12228 / 1C / PRS 101 / PAO1), this protein is Shikimate dehydrogenase (NADP(+)).